A 245-amino-acid chain; its full sequence is Type I iodothyronine deiodinase (245 aa).

Residues 1–9 lie on the Extracellular side of the membrane; it reads LSIRVLLHK. The chain crosses the membrane as a helical; Signal-anchor for type III membrane protein span at residues 10–30; it reads LLILLQVTLSVVVGKTMMILF. The Cytoplasmic portion of the chain corresponds to 31 to 245; sequence PDTTKRYILK…EIRAVLEKLK (215 aa). Sec123 is a catalytic residue. Residue Sec123 is a non-standard amino acid, selenocysteine.

The protein belongs to the iodothyronine deiodinase family. Predominantly monomer. Can form homodimers but homodimerization is not essential for enzyme activity.

It localises to the cell membrane. The protein localises to the endoplasmic reticulum membrane. The protein resides in the basolateral cell membrane. The catalysed reaction is 3,3',5-triiodo-L-thyronine + iodide + A + H(+) = L-thyroxine + AH2. It carries out the reaction 3,3',5'-triiodo-L-thyronine + iodide + A + H(+) = L-thyroxine + AH2. The enzyme catalyses 3,3'-diiodo-L-thyronine + iodide + A + H(+) = 3,3',5'-triiodo-L-thyronine + AH2. It catalyses the reaction 3,3'-diiodo-L-thyronine + iodide + A + H(+) = 3,3',5-triiodo-L-thyronine + AH2. The catalysed reaction is 3'-iodo-L-thyronine + iodide + A + H(+) = 3',5'-diiodo-L-thyronine + AH2. It carries out the reaction 3-iodo-L-thyronine + iodide + A + H(+) = 3,5-diiodo-L-thyronine + AH2. The enzyme catalyses 3-iodo-L-thyronine + iodide + A + H(+) = 3,3'-diiodo-L-thyronine + AH2. It catalyses the reaction 3,3'-diiodothyronamine + iodide + A + H(+) = 3,3',5'-triiodothyronamine + AH2. The catalysed reaction is 3'-iodothyronamine + iodide + A + H(+) = 3',5'-diiodothyronamine + AH2. It carries out the reaction 3-iodothyronamine + iodide + A + H(+) = 3,3'-diiodothyronamine + AH2. The enzyme catalyses 3,3'-diiodothyronamine + iodide + A + H(+) = 3,3',5-triiodothyronamine + AH2. It catalyses the reaction 3-iodothyronamine + iodide + A + H(+) = 3,5-diiodothyronamine + AH2. The catalysed reaction is 3,3'-diiodo-L-thyronine sulfate + iodide + A + H(+) = 3,3',5'-triiodo-L-thyronine sulfate + AH2. It carries out the reaction 3,3',5'-triiodo-L-thyronine sulfate + iodide + A + H(+) = L-thyroxine sulfate + AH2. The enzyme catalyses 3,3'-diiodo-L-thyronine sulfate + iodide + A + H(+) = 3,3',5-triiodo-L-thyronine sulfate + AH2. Its function is as follows. Plays a crucial role in the metabolism of thyroid hormones (TH) and has specific roles in TH activation and inactivation by deiodination. Catalyzes the deiodiantion of L-thyroxine (T4) to 3,5,3'-triiodothyronine (T3) and 3,3',5'-triiodothyronine (rT3) to 3,3'-diiodothyronine (3,3'-T2) via outer-ring deiodination (ORD). Catalyzes the deiodiantion of T4 to rT3, T3 to 3,3'-T2, 3,5-diiodothyronine (3,5-T2) to 3-monoiodothyronine (3-T1) and 3,3'-T2 to 3-T1 via inner-ring deiodination (IRD). Catalyzes the deiodiantion of 3',5'-diiodothyronine (3',5'-T2) to 3'-monoiodothyronine (3'-T1) via ORD. Catalyzes the phenolic ring deiodinations of 3,3',5'-triiodothyronamine, 3',5'-diiodothyronamine and 3,3'-diiodothyronamine as well as tyrosyl ring deiodinations of 3,5,3'-triiodothyronamine and 3,5-diiodothyronamine. Catalyzes the deiodination of L-thyroxine sulfate and 3,3',5-triiodo-L-thyronine sulfate via IRD and of 3,3',5'-triiodo-L-thyronine sulfate via ORD. The sequence is that of Type I iodothyronine deiodinase (DIO1) from Gallus gallus (Chicken).